The primary structure comprises 341 residues: Two-component response regulator EHD1 (341 aa).

Positions 12-127 constitute a Response regulatory domain; that stretch reads RVLVIDDDCS…ELSNIWQHIF (116 aa). D63 carries the post-translational modification 4-aspartylphosphate. The HTH myb-type domain occupies 195-254; that stretch reads DLGKSRLTWTTQLHRQFIAAVNHLGEDKAVPKKILGIMKVKHLTREQVASHLQKYRMQLK. The H-T-H motif DNA-binding region spans 225 to 250; that stretch reads PKKILGIMKVKHLTREQVASHLQKYR.

In terms of processing, two-component system major event consists of a His-to-Asp phosphorelay between a sensor histidine kinase (HK) and a response regulator (RR). In plants, the His-to-Asp phosphorelay involves an additional intermediate named Histidine-containing phosphotransfer protein (HPt). This multistep phosphorelay consists of a His-Asp-His-Asp sequential transfer of a phosphate group between first a His and an Asp of the HK protein, followed by the transfer to a conserved His of the HPt protein and finally the transfer to an Asp in the receiver domain of the RR protein.

The protein localises to the nucleus. In terms of biological role, transcriptional activator that acts as a floral inducer to promote short-day (SD) flowering pathway. Activates Hd3a and other FT-like genes independently from Hd1. May also activate MADS-box transcription factors involved in flowering regulation. The polypeptide is Two-component response regulator EHD1 (EHD1) (Oryza sativa subsp. indica (Rice)).